The sequence spans 256 residues: Eukaryotic translation initiation factor 3 subunit J (256 aa).

2 stretches are compositionally biased toward acidic residues: residues 1–14 (MAEN…DFEP) and 35–54 (EGED…EEAE). 2 disordered regions span residues 1 to 109 (MAEN…SPEE) and 214 to 237 (QSKA…MKND). The segment covering 55 to 101 (AATKQEAQKTVEPKVSEKKKLLEKIREKEKLHKKRQEEVNQQEKEGT) has biased composition (basic and acidic residues). Residues 70–99 (SEKKKLLEKIREKEKLHKKRQEEVNQQEKE) adopt a coiled-coil conformation.

It belongs to the eIF-3 subunit J family. As to quaternary structure, component of the eukaryotic translation initiation factor 3 (eIF-3) complex, which is composed of 13 subunits: eif3a, eif3b, eif3c, eif3d, eif3e, eif3f, eif3g, eif3h, eif3i, eif3j, eif3k, eif3l and eif3m.

The protein resides in the cytoplasm. In terms of biological role, component of the eukaryotic translation initiation factor 3 (eIF-3) complex, which is involved in protein synthesis of a specialized repertoire of mRNAs and, together with other initiation factors, stimulates binding of mRNA and methionyl-tRNAi to the 40S ribosome. The eIF-3 complex specifically targets and initiates translation of a subset of mRNAs involved in cell proliferation. This Xenopus tropicalis (Western clawed frog) protein is Eukaryotic translation initiation factor 3 subunit J (eif3j).